Consider the following 161-residue polypeptide: Ribosome maturation factor RimP (161 aa).

This sequence belongs to the RimP family.

The protein resides in the cytoplasm. Functionally, required for maturation of 30S ribosomal subunits. This chain is Ribosome maturation factor RimP, found in Rickettsia massiliae (strain Mtu5).